The following is a 200-amino-acid chain: ATP synthase subunit delta', mitochondrial (200 aa).

A mitochondrion-targeting transit peptide spans 1–21 (MFRHSSRLLARATTMGWRRPF).

It belongs to the ATPase epsilon chain family. As to quaternary structure, F-type ATPases have 2 components, CF(1) - the catalytic core - and CF(0) - the membrane proton channel. CF(1) has five subunits: alpha(3), beta(3), gamma(1), delta(1), epsilon(1). CF(0) has three main subunits: a, b and c.

The protein localises to the mitochondrion. It localises to the mitochondrion inner membrane. In terms of biological role, mitochondrial membrane ATP synthase (F(1)F(0) ATP synthase or Complex V) produces ATP from ADP in the presence of a proton gradient across the membrane which is generated by electron transport complexes of the respiratory chain. F-type ATPases consist of two structural domains, F(1) - containing the extramembraneous catalytic core, and F(0) - containing the membrane proton channel, linked together by a central stalk and a peripheral stalk. During catalysis, ATP turnover in the catalytic domain of F(1) is coupled via a rotary mechanism of the central stalk subunits to proton translocation. Part of the complex F(1) domain and of the central stalk which is part of the complex rotary element. Rotation of the central stalk against the surrounding alpha(3)beta(3) subunits leads to hydrolysis of ATP in three separate catalytic sites on the beta subunits. The chain is ATP synthase subunit delta', mitochondrial from Ipomoea batatas (Sweet potato).